Reading from the N-terminus, the 257-residue chain is Hydroxyacylglutathione hydrolase (257 aa).

H54, H56, D58, H59, H110, D131, and H169 together coordinate Zn(2+).

Belongs to the metallo-beta-lactamase superfamily. Glyoxalase II family. As to quaternary structure, monomer. Zn(2+) is required as a cofactor.

The catalysed reaction is an S-(2-hydroxyacyl)glutathione + H2O = a 2-hydroxy carboxylate + glutathione + H(+). It participates in secondary metabolite metabolism; methylglyoxal degradation; (R)-lactate from methylglyoxal: step 2/2. In terms of biological role, thiolesterase that catalyzes the hydrolysis of S-D-lactoyl-glutathione to form glutathione and D-lactic acid. This chain is Hydroxyacylglutathione hydrolase, found in Hahella chejuensis (strain KCTC 2396).